The chain runs to 170 residues: Envelope protein 168 (170 aa).

A topological domain (intravirion) is located at residue M1. A helical membrane pass occupies residues 2–22; it reads FYPVVQILIGIILVIILILGF. Residues 23–170 lie on the Virion surface side of the membrane; the sequence is YHLKRKPPKK…TVMGIARNVL (148 aa).

The protein belongs to the asfivirus envelope protein p22 family.

The protein resides in the virion membrane. The protein localises to the host cell membrane. The sequence is that of Envelope protein 168 from African swine fever virus (isolate Tick/South Africa/Pretoriuskop Pr4/1996) (ASFV).